Reading from the N-terminus, the 253-residue chain is MTFEIVFDSAREFESLIATLEKFFDEAVFQVNMEGIQMRAIDPSRVVLVDLNLPEMLFSKYSVESEEAIAFDLKRFLKVLKLARSRDTLVLRKGGENFLEVGLLGDENTWFKLPLIDANTPEIEIPSLPWTVKAVVLAGALKRAVKAAKLVSDSIYFMATPEKLTFKAEGNDSEVRTVLTMEDPGLLDLEHKMTKAKSAYGVAYLEDILRSLADADEVIIRFGFDIPLLLKYMVRDAGEVSFLIAPRVEEGRS.

This sequence belongs to the PCNA family. Homotrimer. The subunits circularize to form a toroid; DNA passes through its center. Replication factor C (RFC) is required to load the toroid on the DNA. Interacts with TIP.

Inhibited by interaction with the PCNA inhibitor TIP. Functionally, sliding clamp subunit that acts as a moving platform for DNA processing. Responsible for tethering the catalytic subunit of DNA polymerase and other proteins to DNA during high-speed replication. The polypeptide is DNA polymerase sliding clamp 2 (Thermococcus kodakarensis (strain ATCC BAA-918 / JCM 12380 / KOD1) (Pyrococcus kodakaraensis (strain KOD1))).